A 108-amino-acid polypeptide reads, in one-letter code: Protein RnfH (108 aa).

The protein belongs to the UPF0125 (RnfH) family.

This chain is Protein RnfH, found in Laribacter hongkongensis (strain HLHK9).